The primary structure comprises 200 residues: Large ribosomal subunit protein uL4 (200 aa).

Residues 43-67 (RAQKTRAEVSGSGKKPWRQKGTGRA) form a disordered region.

The protein belongs to the universal ribosomal protein uL4 family. In terms of assembly, part of the 50S ribosomal subunit.

One of the primary rRNA binding proteins, this protein initially binds near the 5'-end of the 23S rRNA. It is important during the early stages of 50S assembly. It makes multiple contacts with different domains of the 23S rRNA in the assembled 50S subunit and ribosome. Functionally, forms part of the polypeptide exit tunnel. The polypeptide is Large ribosomal subunit protein uL4 (Haemophilus influenzae (strain PittEE)).